Here is a 280-residue protein sequence, read N- to C-terminus: Phospholipase C D (280 aa).

The interval 258 to 280 (VPDPQIMPTQETTPTRGIPSGPC) is disordered.

The protein belongs to the bacterial phospholipase C family.

Its subcellular location is the secreted. The protein localises to the cell wall. It carries out the reaction a 1,2-diacyl-sn-glycero-3-phosphocholine + H2O = phosphocholine + a 1,2-diacyl-sn-glycerol + H(+). The enzyme catalyses 1,2-dihexadecanoyl-sn-glycero-3-phosphocholine + H2O = 1,2-dihexadecanoyl-sn-glycerol + phosphocholine + H(+). In terms of biological role, involved in virulence. Induces cytotoxic effects on mouse macrophage cell lines, via direct or indirect enzymatic hydrolysis of cell membrane phospholipids. Hydrolyzes phosphatidylcholine. Does not have hemolytic activity. This is Phospholipase C D from Mycobacterium tuberculosis (strain ATCC 25618 / H37Rv).